We begin with the raw amino-acid sequence, 109 residues long: Protein phosphatase 1 regulatory subunit 1C (109 aa).

The segment at 25 to 109 is disordered; the sequence is AEQIRKRRPT…TNEREEQRDH (85 aa). Residues 45–54 are compositionally biased toward basic and acidic residues; sequence NPPEIDDKRV. Positions 55–75 are enriched in polar residues; it reads PNTQGELQNASPKQRKQSVYT. Positions 100–109 are enriched in basic and acidic residues; sequence TNEREEQRDH.

This sequence belongs to the protein phosphatase inhibitor 1 family.

Its subcellular location is the cytoplasm. Functionally, may increase cell susceptibility to TNF-induced apoptosis. This is Protein phosphatase 1 regulatory subunit 1C (PPP1R1C) from Pongo abelii (Sumatran orangutan).